A 199-amino-acid polypeptide reads, in one-letter code: LIM domain-containing protein WLIM2b (199 aa).

LIM zinc-binding domains lie at glutamine 8–glutamate 68 and glutamate 106–glutamate 166.

As to quaternary structure, interacts with F-actin. As to expression, expressed in roots, leaves, stems, flowers and siliques. Barely detected in pollen.

It localises to the cytoplasm. The protein localises to the cytoskeleton. Functionally, binds to actin filaments and promotes cross-linking into thick bundles. Has an actin-stabilizing activity. The actin regulatory activities are not regulated by pH and [Ca(2+)]. This Arabidopsis thaliana (Mouse-ear cress) protein is LIM domain-containing protein WLIM2b.